Consider the following 247-residue polypeptide: LHFPL tetraspan subfamily member 4 protein (247 aa).

Helical transmembrane passes span 22–42 (IGVL…VVFI), 97–117 (FFVL…ALFF), 127–147 (ICAW…MIFP), and 178–198 (ILAI…FVLG).

It belongs to the LHFP family. Interacts with GABA(A) receptor subunits. Interacts with GABRB3. Interacts with GABRA2. Interacts with GABRG2. Identified in a complex of 720 kDa composed of LHFPL4, NLGN2, GABRA1, GABRB2, GABRG2 and GABRB3. Interacts with GABRA1. Interacts with NLGN2; leading to mutual regulation of protein level and synaptic clustering.

The protein localises to the cell projection. Its subcellular location is the dendrite. The protein resides in the postsynaptic cell membrane. Plays a role in the regulation of inhibitory synapse formation and function by being involved in maintening gamma-aminobutyric acid receptors (GABAARs) clustering and their associated scaffold proteins at inhibitory synaptic sites. Acts in concert with NLGN2 to recruit or stabilize GABAARs. This chain is LHFPL tetraspan subfamily member 4 protein, found in Bos taurus (Bovine).